A 79-amino-acid chain; its full sequence is Conotoxin Tr6.3 (79 aa).

The N-terminal stretch at 1-22 (MKLTCVLIISVLFLTASQLITA) is a signal peptide. Positions 23–47 (VYSRDKQQYRAARLRDEMRNLKGAR) are excised as a propeptide. 3 cysteine pairs are disulfide-bonded: Cys-49/Cys-62, Cys-56/Cys-67, and Cys-61/Cys-77. Residues Pro-60 and Pro-63 each carry the 4-hydroxyproline modification.

The protein belongs to the conotoxin O1 superfamily. In terms of tissue distribution, expressed by the venom duct.

Its subcellular location is the secreted. In terms of biological role, ion channel inhibitor that inhibits the increase in intracellular calcium upon depolarization in DRG neurons. In vivo, both intraperitoneal and intracranial injections into mice induce hyperactivity. This chain is Conotoxin Tr6.3, found in Conus terebra (Sea snail).